The primary structure comprises 217 residues: Protein canopy 4 (217 aa).

An N-terminal signal peptide occupies residues 1-27 (MEMFTVFLFYMFSLVLANQEERLPNKC). 3 cysteine pairs are disulfide-bonded: Cys-27–Cys-185, Cys-30–Cys-173, and Cys-83–Cys-145. Residues 194–217 (MGMKGSEEESEGKDGKETHDAGEL) are disordered. Over residues 205-217 (GKDGKETHDAGEL) the composition is skewed to basic and acidic residues.

Belongs to the canopy family.

It localises to the secreted. This is Protein canopy 4 (cnpy4) from Danio rerio (Zebrafish).